We begin with the raw amino-acid sequence, 312 residues long: Pantothenate kinase (312 aa).

97–104 provides a ligand contact to ATP; that stretch reads GSVAVGKS.

It belongs to the prokaryotic pantothenate kinase family.

Its subcellular location is the cytoplasm. The catalysed reaction is (R)-pantothenate + ATP = (R)-4'-phosphopantothenate + ADP + H(+). It participates in cofactor biosynthesis; coenzyme A biosynthesis; CoA from (R)-pantothenate: step 1/5. The sequence is that of Pantothenate kinase from Mycobacterium bovis (strain BCG / Pasteur 1173P2).